We begin with the raw amino-acid sequence, 284 residues long: RNA polymerase sigma factor RpoH (284 aa).

The sigma-70 factor domain-2 stretch occupies residues L53–R122. The Interaction with polymerase core subunit RpoC motif lies at D77–Q80. The tract at residues A228 to A280 is sigma-70 factor domain-4. A DNA-binding region (H-T-H motif) is located at residues L253–K272.

The protein belongs to the sigma-70 factor family. RpoH subfamily. As to quaternary structure, interacts with the RNA polymerase core enzyme.

The protein resides in the cytoplasm. In terms of biological role, sigma factors are initiation factors that promote the attachment of RNA polymerase to specific initiation sites and are then released. This sigma factor is involved in regulation of expression of heat shock genes. The protein is RNA polymerase sigma factor RpoH of Escherichia coli O6:H1 (strain CFT073 / ATCC 700928 / UPEC).